A 176-amino-acid polypeptide reads, in one-letter code: Large ribosomal subunit protein uL6 (176 aa).

Belongs to the universal ribosomal protein uL6 family. In terms of assembly, part of the 50S ribosomal subunit.

Its function is as follows. This protein binds to the 23S rRNA, and is important in its secondary structure. It is located near the subunit interface in the base of the L7/L12 stalk, and near the tRNA binding site of the peptidyltransferase center. This chain is Large ribosomal subunit protein uL6, found in Burkholderia ambifaria (strain ATCC BAA-244 / DSM 16087 / CCUG 44356 / LMG 19182 / AMMD) (Burkholderia cepacia (strain AMMD)).